Reading from the N-terminus, the 387-residue chain is Acyl-CoA dehydrogenase FadE29 (387 aa).

FAD contacts are provided by residues 123–126 (IGYT), T132, and T158. E241 serves as the catalytic Proton acceptor. An FAD-binding site is contributed by 367 to 369 (VNE).

It belongs to the acyl-CoA dehydrogenase family. In terms of assembly, heterotetramer composed of FadE28 and FadE29. It depends on FAD as a cofactor.

The enzyme catalyses 3-oxochol-4-en-22-oyl-CoA + A = 3-oxochola-4,17-dien-22-oyl-CoA + AH2. It functions in the pathway steroid metabolism; cholesterol degradation. Its function is as follows. Involved in the third cycle of side chain dehydrogenation in the beta-oxidation of cholesterol catabolism. Contributes partly to the virulence by increasing the efficiency of beta-oxidation. Catalyzes the dehydrogenation of 2'-propanoyl-CoA ester side chains of 3-oxo-4-pregnene-20-carboxyl-CoA (3-OPC-CoA) to yield 3-oxo-4,17-pregnadiene-20-carboxyl-CoA (3-OPDC-CoA). Also able to dehydrogenate steroyl-CoA such as 3-oxo-chol-4-en-24-oyl-CoA (3-OCO-CoA), 1beta-(2'-propanoyl-CoA)-3a-alpha-H- 7a-beta-methylhexahydro-4-indanone (indanone-CoA ester), hexahydroindanone and pregenenone. This is Acyl-CoA dehydrogenase FadE29 (fadE29) from Mycobacterium tuberculosis (strain ATCC 25618 / H37Rv).